The following is a 146-amino-acid chain: Hemoglobin subunit beta (146 aa).

One can recognise a Globin domain in the interval 2–146 (HWSAEEKQLI…VAHALARKYH (145 aa)). Positions 63 and 92 each coordinate heme b.

It belongs to the globin family. As to quaternary structure, heterotetramer of two alpha chains and two beta chains. As to expression, red blood cells.

Its function is as follows. Involved in oxygen transport from the lung to the various peripheral tissues. This chain is Hemoglobin subunit beta (HBB), found in Phasianus colchicus colchicus (Black-necked pheasant).